A 527-amino-acid chain; its full sequence is Putative ribose/galactose/methyl galactoside import ATP-binding protein 2 (527 aa).

Residues 1 to 31 are disordered; sequence MFTARVARPMAGDDAPAASSGSTGSSAPPAS. The span at 12–31 shows a compositional bias: low complexity; that stretch reads GDDAPAASSGSTGSSAPPAS. ABC transporter domains follow at residues 38–274 and 284–523; these read LEVR…VGRE and VPIG…RIMD. 70-77 lines the ATP pocket; sequence GENGAGKS.

The protein belongs to the ABC transporter superfamily. Carbohydrate importer 2 (CUT2) (TC 3.A.1.2) family.

It localises to the cell inner membrane. It carries out the reaction D-ribose(out) + ATP + H2O = D-ribose(in) + ADP + phosphate + H(+). It catalyses the reaction D-galactose(out) + ATP + H2O = D-galactose(in) + ADP + phosphate + H(+). In terms of biological role, part of an ABC transporter complex involved in carbohydrate import. Could be involved in ribose, galactose and/or methyl galactoside import. Responsible for energy coupling to the transport system. The protein is Putative ribose/galactose/methyl galactoside import ATP-binding protein 2 of Burkholderia lata (strain ATCC 17760 / DSM 23089 / LMG 22485 / NCIMB 9086 / R18194 / 383).